Consider the following 345-residue polypeptide: Phosphoribosylformylglycinamidine cyclo-ligase (345 aa).

Belongs to the AIR synthase family.

The protein localises to the cytoplasm. The enzyme catalyses 2-formamido-N(1)-(5-O-phospho-beta-D-ribosyl)acetamidine + ATP = 5-amino-1-(5-phospho-beta-D-ribosyl)imidazole + ADP + phosphate + H(+). The protein operates within purine metabolism; IMP biosynthesis via de novo pathway; 5-amino-1-(5-phospho-D-ribosyl)imidazole from N(2)-formyl-N(1)-(5-phospho-D-ribosyl)glycinamide: step 2/2. This chain is Phosphoribosylformylglycinamidine cyclo-ligase, found in Escherichia coli (strain K12 / MC4100 / BW2952).